The primary structure comprises 61 residues: UPF0434 protein PST_2635 (61 aa).

Belongs to the UPF0434 family.

The protein is UPF0434 protein PST_2635 of Stutzerimonas stutzeri (strain A1501) (Pseudomonas stutzeri).